The primary structure comprises 319 residues: Ficolin-2 (319 aa).

The signal sequence occupies residues 1-22; it reads MVLGSAALFVLSLCVTELTLHA. The region spanning 45 to 101 is the Collagen-like domain; sequence GCPGLPGALGPKGEAGAKGDRGESGLPGHPGKAGPTGPKGDRGEKGVRGEKGDTGPS. The interval 53-106 is disordered; that stretch reads LGPKGEAGAKGDRGESGLPGHPGKAGPTGPKGDRGEKGVRGEKGDTGPSQSCAT. Residues 83–97 show a composition bias toward basic and acidic residues; it reads KGDRGEKGVRGEKGD. In terms of domain architecture, Fibrinogen C-terminal spans 102-319; the sequence is QSCATGPRTC…KVSEMKVRLI (218 aa). 2 disulfide bridges follow: Cys-104–Cys-132 and Cys-111–Cys-139. Ca(2+) is bound by residues Asp-255, Asp-257, and Ser-261. A disulfide bond links Cys-263 and Cys-276. The N-linked (GlcNAc...) asparagine glycan is linked to Asn-306.

The protein belongs to the ficolin lectin family. Homotrimer. Interacts with elastin. Interacts with MASP1 and MASP2.

Its subcellular location is the secreted. In terms of biological role, may function in innate immunity through activation of the lectin complement pathway. Calcium-dependent and GlcNAc-binding lectin. This chain is Ficolin-2 (Fcn2), found in Rattus norvegicus (Rat).